The following is a 326-amino-acid chain: MWRPRWDPGILKAEALALLPCGLGMAFSQSHVMASRRHQHGRLIIEVDEYSSNPTQAFTFYNINQGRFQPPHVQMVDPVPHDAPKPPGYTRFVCVSDTHSRTDPIQMPYGDVLIHAGDFTELGLPSEVKKFNEWLGSLPYEYKIVIAGNHELTFDQEFMADLIKQDFYYFPSVSKLKPENYENVQSLLTNCIYLQDSEVTVRGFRIYGSPWQPWFYGWGFNLPRGQALLEKWNLIPEGVDILITHGPPLGFLDWVPKKMQRVGCVELLNTVQRRVQPRLHVFGHIHEGYGVMADGTTTYVNASVCTVNYQPVNPPIVIDLPTPRNS.

This sequence belongs to the UPF0046 family.

Its function is as follows. May have metallophosphoesterase activity (in vitro). This is Metallophosphoesterase domain-containing protein 1 (Mpped1) from Mus musculus (Mouse).